The following is a 310-amino-acid chain: Protoheme IX farnesyltransferase (310 aa).

The next 9 helical transmembrane spans lie at 26-45 (VMSL…PVTV), 49-71 (IALT…NMWW), 95-115 (GEAL…LGLA), 118-138 (LFAA…YSMW), 147-167 (IVIG…VATG), 174-194 (LFMF…LALF), 220-240 (VLVY…TGIG), 243-263 (LYLA…VRIW), and 289-309 (LFLH…GLGG).

This sequence belongs to the UbiA prenyltransferase family. Protoheme IX farnesyltransferase subfamily. As to quaternary structure, interacts with CtaA.

It localises to the cell inner membrane. It carries out the reaction heme b + (2E,6E)-farnesyl diphosphate + H2O = Fe(II)-heme o + diphosphate. The protein operates within porphyrin-containing compound metabolism; heme O biosynthesis; heme O from protoheme: step 1/1. Functionally, converts heme B (protoheme IX) to heme O by substitution of the vinyl group on carbon 2 of heme B porphyrin ring with a hydroxyethyl farnesyl side group. The sequence is that of Protoheme IX farnesyltransferase from Cereibacter sphaeroides (strain ATCC 17029 / ATH 2.4.9) (Rhodobacter sphaeroides).